A 45-amino-acid chain; its full sequence is uncharacterized protein (45 aa).

The N-terminal stretch at 1–19 (MTFQILFLFVFHFVYIFRA) is a signal peptide.

This is an uncharacterized protein from Saccharomyces cerevisiae (strain ATCC 204508 / S288c) (Baker's yeast).